The primary structure comprises 816 residues: Protein EFR3 homolog B (816 aa).

A compositionally biased stretch (polar residues) spans 206–219; that stretch reads SGEGTESRSPSPLQ. The disordered stretch occupies residues 206–230; the sequence is SGEGTESRSPSPLQASEKEKESPAE. Residues 221–230 show a composition bias toward basic and acidic residues; sequence SEKEKESPAE.

Belongs to the EFR3 family. Component of a phosphatidylinositol 4-kinase (PI4K) complex. In terms of processing, palmitoylated at its N-terminus, anchoring the protein to the plasma membrane.

The protein resides in the cell membrane. Its function is as follows. Component of a complex required to localize phosphatidylinositol 4-kinase (PI4K) to the plasma membrane. The complex acts as a regulator of phosphatidylinositol 4-phosphate (PtdIns(4)P) synthesis. In the complex, efr3b probably acts as the membrane-anchoring component. This Danio rerio (Zebrafish) protein is Protein EFR3 homolog B (efr3b).